Consider the following 485-residue polypeptide: Zinc finger protein 165 (485 aa).

A Glycyl lysine isopeptide (Lys-Gly) (interchain with G-Cter in SUMO2) cross-link involves residue Lys23. In terms of domain architecture, SCAN box spans 62 to 127 (GPREALSRLR…EEAVTILEDL (66 aa)). Glycyl lysine isopeptide (Lys-Gly) (interchain with G-Cter in SUMO2) cross-links involve residues Lys162 and Lys195. The segment at 290–314 (KSCKHGTCDQSFKWNSDFINHQIIY) adopts a C2H2-type 1; degenerate zinc-finger fold. 5 C2H2-type zinc fingers span residues 344 to 366 (HQCN…QRIH), 372 to 394 (YECN…RRIH), 400 to 422 (FGCK…QRIH), 428 to 450 (YECS…FRIH), and 456 to 478 (YECS…QRIH).

Belongs to the krueppel C2H2-type zinc-finger protein family. Expressed specifically in testis.

It localises to the nucleus. Its function is as follows. May be involved in transcriptional regulation. The polypeptide is Zinc finger protein 165 (ZNF165) (Homo sapiens (Human)).